We begin with the raw amino-acid sequence, 207 residues long: Ubiquitin-conjugating enzyme E2 E3 (207 aa).

Residues 1-10 (MSSDRQRSDD) show a composition bias toward basic and acidic residues. The interval 1–63 (MSSDRQRSDD…KTTAKLSTSA (63 aa)) is disordered. Ser2 bears the N-acetylserine mark. Ser8 carries the post-translational modification Phosphoserine. The segment covering 50-63 (KLSSKTTAKLSTSA) has biased composition (low complexity). In terms of domain architecture, UBC core spans 61–207 (TSAKRIQKEL…ARQWTKRYAT (147 aa)). Cys145 (glycyl thioester intermediate) is an active-site residue.

The protein belongs to the ubiquitin-conjugating enzyme family. The ubiquitin-loaded form interacts specifically with importin-11 (IPO11), leading to its import into the nucleus. Interacts with NEDD4L.

The protein resides in the nucleus. Its subcellular location is the cytoplasm. The enzyme catalyses S-ubiquitinyl-[E1 ubiquitin-activating enzyme]-L-cysteine + [E2 ubiquitin-conjugating enzyme]-L-cysteine = [E1 ubiquitin-activating enzyme]-L-cysteine + S-ubiquitinyl-[E2 ubiquitin-conjugating enzyme]-L-cysteine.. Its pathway is protein modification; protein ubiquitination. Accepts ubiquitin from the E1 complex and catalyzes its covalent attachment to other proteins. In vitro catalyzes 'Lys-11'- and 'Lys-48'-, as well as 'Lys-63'-linked polyubiquitination. Participates in the regulation of transepithelial sodium transport in renal cells. The chain is Ubiquitin-conjugating enzyme E2 E3 (UBE2E3) from Bos taurus (Bovine).